Reading from the N-terminus, the 75-residue chain is Sec-independent protein translocase protein TatA (75 aa).

Residues 1–21 (MGSFSIWHWLVVLAIVLLVFG) traverse the membrane as a helical segment. Positions 40–75 (KKGMRDEDKPNAQLGDESRSQDASRTAQDEHDRTPR) are disordered.

Belongs to the TatA/E family. In terms of assembly, the Tat system comprises two distinct complexes: a TatABC complex, containing multiple copies of TatA, TatB and TatC subunits, and a separate TatA complex, containing only TatA subunits. Substrates initially bind to the TatABC complex, which probably triggers association of the separate TatA complex to form the active translocon.

The protein resides in the cell inner membrane. In terms of biological role, part of the twin-arginine translocation (Tat) system that transports large folded proteins containing a characteristic twin-arginine motif in their signal peptide across membranes. TatA could form the protein-conducting channel of the Tat system. The protein is Sec-independent protein translocase protein TatA of Stenotrophomonas maltophilia (strain R551-3).